A 427-amino-acid polypeptide reads, in one-letter code: Serine hydroxymethyltransferase (427 aa).

(6S)-5,6,7,8-tetrahydrofolate is bound by residues L118 and 122-124; that span reads GHL. At K227 the chain carries N6-(pyridoxal phosphate)lysine. Residues E243 and 351–353 each bind (6S)-5,6,7,8-tetrahydrofolate; that span reads SPF.

Belongs to the SHMT family. In terms of assembly, homodimer. The cofactor is pyridoxal 5'-phosphate.

Its subcellular location is the cytoplasm. It catalyses the reaction (6R)-5,10-methylene-5,6,7,8-tetrahydrofolate + glycine + H2O = (6S)-5,6,7,8-tetrahydrofolate + L-serine. It participates in one-carbon metabolism; tetrahydrofolate interconversion. The protein operates within amino-acid biosynthesis; glycine biosynthesis; glycine from L-serine: step 1/1. Catalyzes the reversible interconversion of serine and glycine with tetrahydrofolate (THF) serving as the one-carbon carrier. This reaction serves as the major source of one-carbon groups required for the biosynthesis of purines, thymidylate, methionine, and other important biomolecules. Also exhibits THF-independent aldolase activity toward beta-hydroxyamino acids, producing glycine and aldehydes, via a retro-aldol mechanism. The chain is Serine hydroxymethyltransferase from Thermotoga maritima (strain ATCC 43589 / DSM 3109 / JCM 10099 / NBRC 100826 / MSB8).